The sequence spans 128 residues: Cytochrome c-type biogenesis protein CcmE (128 aa).

The Cytoplasmic segment spans residues 1-8; sequence MQKRVRNR. A helical; Signal-anchor for type II membrane protein membrane pass occupies residues 9–29; that stretch reads LITIIICFCSAFLGISIILYN. Topologically, residues 30–128 are periplasmic; sequence LEKNIVFFLP…KHDENYRPPQ (99 aa). The heme site is built by H120 and Y124.

The protein belongs to the CcmE/CycJ family.

The protein localises to the cell inner membrane. Functionally, heme chaperone required for the biogenesis of c-type cytochromes. Transiently binds heme delivered by CcmC and transfers the heme to apo-cytochromes in a process facilitated by CcmF and CcmH. The protein is Cytochrome c-type biogenesis protein CcmE of Rickettsia rickettsii (strain Iowa).